Consider the following 324-residue polypeptide: Polycomb complex protein BMI-1-B (324 aa).

Residues 18–57 (CVLCGGYFIDATTIVECLHSFCKMCIVRYLETSKYCPICD) form an RING-type zinc finger. A Nuclear localization signal motif is present at residues 81-95 (KLVPGLFKNEMKRRR). Positions 232–324 (IKLSSPRNDM…TSHNGSNSLG (93 aa)) are disordered. Low complexity predominate over residues 256–279 (DKPNSPSIVAAPSTSSSMPSPNTP). Polar residues-rich tracts occupy residues 280–295 (VQST…TING) and 303–324 (NGQT…NSLG).

Component of a PRC1-like complex. Homodimer. Interacts with cbx2.

It is found in the nucleus. Component of a Polycomb group (PcG) multiprotein PRC1-like complex, a complex class required to maintain the transcriptionally repressive state of many genes, including Hox genes, throughout development. PcG PRC1 complex acts via chromatin remodeling and modification of histones; it mediates monoubiquitination of histone H2A 'Lys-119', rendering chromatin heritably changed in its expressibility. In the PRC1 complex, it is required to stimulate the E3 ubiquitin-protein ligase activity of rnf2. The polypeptide is Polycomb complex protein BMI-1-B (bmi1b) (Danio rerio (Zebrafish)).